A 478-amino-acid polypeptide reads, in one-letter code: Noelin-3 (478 aa).

Residues 1 to 23 form the signal peptide; it reads MSAPLLKLGAVLSTMAMISNWMS. N-linked (GlcNAc...) asparagine glycans are attached at residues N33, N95, N179, N299, and N465. A coiled-coil region spans residues 77 to 217; it reads CSRDAKSRQL…TRLRDCMKKL (141 aa). The Olfactomedin-like domain maps to 218–470; it reads TCGKLMKITG…QVLFNVTLFH (253 aa). A disulfide bridge connects residues C219 and C401.

As to quaternary structure, peripherally associated with AMPAR complex. AMPAR complex consists of an inner core made of 4 pore-forming GluA/GRIA proteins (GRIA1, GRIA2, GRIA3 and GRIA4) and 4 major auxiliary subunits arranged in a twofold symmetry. One of the two pairs of distinct binding sites is occupied either by CNIH2, CNIH3 or CACNG2, CACNG3. The other harbors CACNG2, CACNG3, CACNG4, CACNG8 or GSG1L. This inner core of AMPAR complex is complemented by outer core constituents binding directly to the GluA/GRIA proteins at sites distinct from the interaction sites of the inner core constituents. Outer core constituents include at least PRRT1, PRRT2, CKAMP44/SHISA9, FRRS1L and NRN1. The proteins of the inner and outer core serve as a platform for other, more peripherally associated AMPAR constituents, including OLFM3. Alone or in combination, these auxiliary subunits control the gating and pharmacology of the AMPAR complex and profoundly impact their biogenesis and protein processing. Homodimer. Interacts with MYOC. Interacts with OLFM2. As to expression, expressed in the brain (at protein level). Also expressed in the retina, mainly in the ganglion cell layer and in the amacrine cell subregion of the inner nuclear layer. Expressed at high levels in the epithelial cells of the posterior iris and the ciliary body and, at lower levels, in the trabecular meshwork. Isoform 2 preferentially expressed in retina and brain, while isoform 1 preferentially expressed in the tissues of the eye angle.

It localises to the secreted. Its subcellular location is the synapse. The polypeptide is Noelin-3 (Olfm3) (Rattus norvegicus (Rat)).